The following is a 647-amino-acid chain: Probable inactive receptor kinase RLK902 (647 aa).

A signal peptide spans 1 to 29 (MRLFFTPSMSNLSIFFSILLLSLPLPSIG). LRR repeat units lie at residues 69–93 (GGRVTALRLPGETLSGHIPEGIFGN), 94–118 (LTQLRTLSLRLNGLTGSLPLDLGSC), 119–142 (SDLRRLYLQGNRFSGEIPEVLFSL), 144–165 (NLVRLNLAENEFSGEISSGFKN), and 166–192 (LTRLKTLYLENNKLSGSLLDLDLSLDQ). Residues 268 to 288 (GIVIGCVVGLSLIVMILMVLF) traverse the membrane as a helical segment. The 275-residue stretch at 365–639 (RASAEVLGKG…EVVRRIQELR (275 aa)) folds into the Protein kinase domain. S367 is modified (phosphoserine). 371-379 (LGKGTFGTA) contacts ATP. T388 carries the post-translational modification Phosphothreonine. An ATP-binding site is contributed by K393. S444 bears the Phosphoserine mark. Phosphothreonine is present on T520. Position 540 is a phosphoserine (S540). T618 carries the phosphothreonine modification.

The protein belongs to the protein kinase superfamily. Ser/Thr protein kinase family. In terms of assembly, interacts with At3g17950, At3g27210 and At5g05190. In terms of processing, autophosphorylation. In terms of tissue distribution, expressed in root tips, lateral root primordia, stipules, and floral organ abscission zones.

It localises to the cell membrane. The polypeptide is Probable inactive receptor kinase RLK902 (RLK902) (Arabidopsis thaliana (Mouse-ear cress)).